Consider the following 1164-residue polypeptide: DNA-directed RNA polymerase 132 kDa polypeptide (1164 aa).

The protein belongs to the RNA polymerase beta chain family. As to quaternary structure, the DNA-dependent RNA polymerase used for intermediate and late genes expression consists of eight subunits (147) kDa, (133) kDa, (35) kDa, (30) kDa, (22) kDa, (19) kDa, (18) kDa and (7) kDa totalling more than 500 kDa in mass. The same holoenzyme, with the addition of the transcription-specificity factor RAP94, is used for early gene expression.

Its subcellular location is the virion. It catalyses the reaction RNA(n) + a ribonucleoside 5'-triphosphate = RNA(n+1) + diphosphate. In terms of biological role, part of the DNA-dependent RNA polymerase which catalyzes the transcription of viral DNA into RNA using the four ribonucleoside triphosphates as substrates. Responsible for the transcription of early, intermediate and late genes. DNA-dependent RNA polymerase associates with the early transcription factor (ETF), itself composed of D6 and A7, thereby allowing the early genes transcription. Late transcription, and probably also intermediate transcription, require newly synthesized RNA polymerase. The sequence is that of DNA-directed RNA polymerase 132 kDa polypeptide (RPO132) from Oryctolagus cuniculus (Rabbit).